Reading from the N-terminus, the 441-residue chain is DNA primase DnaG (441 aa).

One can recognise a Toprim domain in the interval 165 to 241 (DTIIIVEGRA…DIDYVARAPP (77 aa)). Residues Glu171, Asp215, and Asp217 each coordinate Mg(2+). Over residues 299 to 315 (KEEVAERGEEMESKAEG) the composition is skewed to basic and acidic residues. The segment at 299–320 (KEEVAERGEEMESKAEGAEQPT) is disordered.

The protein belongs to the archaeal DnaG primase family. As to quaternary structure, forms a ternary complex with MCM helicase and DNA. Component of the archaeal exosome complex. It depends on Mg(2+) as a cofactor.

The catalysed reaction is ssDNA + n NTP = ssDNA/pppN(pN)n-1 hybrid + (n-1) diphosphate.. Its function is as follows. RNA polymerase that catalyzes the synthesis of short RNA molecules used as primers for DNA polymerase during DNA replication. Also part of the exosome, which is a complex involved in RNA degradation. Acts as a poly(A)-binding protein that enhances the interaction between heteromeric, adenine-rich transcripts and the exosome. This is DNA primase DnaG from Ignicoccus hospitalis (strain KIN4/I / DSM 18386 / JCM 14125).